Reading from the N-terminus, the 63-residue chain is Putative antitoxin AF_1084 (63 aa).

This sequence belongs to the UPF0165 family.

In terms of biological role, possibly the antitoxin component of a type II toxin-antitoxin (TA) system. This is Putative antitoxin AF_1084 from Archaeoglobus fulgidus (strain ATCC 49558 / DSM 4304 / JCM 9628 / NBRC 100126 / VC-16).